A 446-amino-acid polypeptide reads, in one-letter code: MREMITLESLCRALADEQIAAEELRERALDTEARLTLLNCFIREGDAVSQFGEADQARKGTSLWGVPVSFKDNICVRGLPLTAGTRGMSGFIADQDAAIVSQLKALGAVVAGKNNMHELSFGVTSINPHWGAVGNPVAPGYCAGGSSGGSAAAVASGIVPLSVGTDTGGSIRIPAAFCGITGFRPTTGRLSTAGIIPVSHTKDCVGLLTRTAGDAEFVYGLLSGKQQSFPLNRTGPCRIGLPVSMWSDLDGEVERACINALSLLRKTGFEFVEIDDADIVELNQTLTFTVPLYEFFADFAQSLLSLGWKHGIHHIFAQVDDANVKGIINHHLGEGAIKPAHYLSSLQNGELLKRKMDELFARHHIKLLGYPTVPCRVPHLDHADRPEFFSQAIRNTDLASNAMLPSITIPVGPEGRLPVGLSFDAPRARDAFLLSNVSLIEKVLKG.

Residues Lys71 and Ser146 each act as charge relay system in the active site. Ser170 serves as the catalytic Acyl-ester intermediate.

It belongs to the amidase family.

The protein operates within plant hormone metabolism; auxin biosynthesis. In terms of biological role, hydrolyzes indole-3-acetamide (IAM) into indole-3-acetic acid (IAA). This chain is Indoleacetamide hydrolase (iaaH), found in Pseudomonas syringae pv. syringae.